Here is a 506-residue protein sequence, read N- to C-terminus: GTPase Der (506 aa).

EngA-type G domains are found at residues 3–166 (PVVA…GEQL) and 218–391 (IKIA…ACAT). GTP-binding positions include 9–16 (GRPNVGKS), 56–60 (DTGGI), 118–121 (NKTD), 224–231 (GRPNVGKS), 271–275 (DTAGV), and 336–339 (NKWD). The region spanning 392–476 (QKNSTSMLTR…PIRIQFQEGN (85 aa)) is the KH-like domain.

Belongs to the TRAFAC class TrmE-Era-EngA-EngB-Septin-like GTPase superfamily. EngA (Der) GTPase family. In terms of assembly, associates with the 50S ribosomal subunit.

GTPase that plays an essential role in the late steps of ribosome biogenesis. This chain is GTPase Der, found in Actinobacillus pleuropneumoniae serotype 7 (strain AP76).